Consider the following 364-residue polypeptide: NAD(P)H-quinone oxidoreductase subunit 1, chloroplastic (364 aa).

6 helical membrane-spanning segments follow: residues 27–47 (IWLL…VLVI), 98–118 (FSVG…VIPF), 127–147 (ISIG…GLLM), 255–275 (GLFY…VTVL), 301–321 (VFGS…FLFV), and 337–357 (LLNL…LLTT).

This sequence belongs to the complex I subunit 1 family. NDH is composed of at least 16 different subunits, 5 of which are encoded in the nucleus.

It localises to the plastid. The protein localises to the chloroplast thylakoid membrane. The catalysed reaction is a plastoquinone + NADH + (n+1) H(+)(in) = a plastoquinol + NAD(+) + n H(+)(out). It carries out the reaction a plastoquinone + NADPH + (n+1) H(+)(in) = a plastoquinol + NADP(+) + n H(+)(out). Functionally, NDH shuttles electrons from NAD(P)H:plastoquinone, via FMN and iron-sulfur (Fe-S) centers, to quinones in the photosynthetic chain and possibly in a chloroplast respiratory chain. The immediate electron acceptor for the enzyme in this species is believed to be plastoquinone. Couples the redox reaction to proton translocation, and thus conserves the redox energy in a proton gradient. This Illicium oligandrum (Star anise) protein is NAD(P)H-quinone oxidoreductase subunit 1, chloroplastic.